Here is a 676-residue protein sequence, read N- to C-terminus: Forkhead box protein biniou (676 aa).

5 disordered regions span residues 22–50 (YHDPRAHPPFSHPHAHSHPHQHTHTGHPY), 131–160 (AHSAGSASPQSNSKTPTDLPQDLQYASSST), 203–232 (QEQAGQQQPQQLPAQQLQHSPGGGYMSRIS), 249–312 (NYSS…PEKP), and 583–651 (IQHA…AYLP). A compositionally biased stretch (basic residues) spans 34-48 (PHAHSHPHQHTHTGH). The segment covering 133–160 (SAGSASPQSNSKTPTDLPQDLQYASSST) has biased composition (polar residues). Positions 203–220 (QEQAGQQQPQQLPAQQLQ) are enriched in low complexity. A compositionally biased stretch (polar residues) spans 257–273 (PAKSLNGSESSPPSQNH). The segment at residues 311 to 408 (KPALSYINMI…DEGSLRRRPR (98 aa)) is a DNA-binding region (fork-head). The segment covering 583–593 (IQHAQAQAQAQ) has biased composition (low complexity). Over residues 594-611 (AHHHHHQHHASHPSHSHQ) the composition is skewed to basic residues. A compositionally biased stretch (low complexity) spans 612 to 625 (GHGSMHQNHGTSST). Residues 637-647 (GIDHSPIDRKP) are compositionally biased toward basic and acidic residues.

As to quaternary structure, binds to DNA. In terms of tissue distribution, in embryo, expressed in all types of visceral muscles and their progenitors (at protein level). In late stage 10 embryo, expressed in the caudal visceral mesoderm and trunk and hindgut visceral mesoderm progenitors.

Its subcellular location is the nucleus. Functionally, component of a regulatory network controlling visceral mesoderm development and midgut morphogenesis. Transcriptional regulator involved in the activation of a large number of genes in the visceral mesoderm including betaTub60D, dpp and Hand. Binds to and regulates a number of enhancers driving expression in the visceral mesoderm in a temporally and spatially restricted manner. Also to binds to enhancers cooperatively with activators, such as bap or HLH54F, to coregulate expression of shared target genes in the visceral mesoderm. Binds to the Ndg enhancer and drives expression of Ndg in the late visceral musculature. May be involved in the transcriptional regulation of wupA in the visceral mesoderm. Plays an indirect role in the later stages of salivary gland positioning. The sequence is that of Forkhead box protein biniou (bin) from Drosophila melanogaster (Fruit fly).